The chain runs to 392 residues: uncharacterized protein (392 aa).

The signal sequence occupies residues 1–23 (MWTALVLVWISSVLLPRSHMMSA). The Extracellular portion of the chain corresponds to 24–342 (EPRNIVTNKW…DALTPSLVNK (319 aa)). N77 carries N-linked (GlcNAc...) asparagine glycosylation. Disordered regions lie at residues 83–154 (AEVT…PRTA) and 167–320 (AAGT…TDSC). A compositionally biased stretch (low complexity) spans 86–97 (TTHGTNTSTPTT). Composition is skewed to polar residues over residues 107–127 (SRTL…TRPT) and 170–249 (TVNT…SAST). N-linked (GlcNAc...) asparagine glycosylation occurs at N172. Composition is skewed to low complexity over residues 265–277 (SPTT…LPTQ) and 284–309 (TLLT…SRSS). A helical transmembrane segment spans residues 343–363 (MLLLVVLLVGVTLFIAVLVMF). Topologically, residues 364–392 (ALQAYESYKKKDYTQVDYLINGMYADSEM) are cytoplasmic.

It is found in the cell membrane. It localises to the golgi apparatus. The protein resides in the trans-Golgi network membrane. This is an uncharacterized protein from Mus musculus (Mouse).